Consider the following 111-residue polypeptide: Cell cycle protein GpsB (111 aa).

Positions 38 to 72 form a coiled coil; sequence IKDYEAFHKEFDQLKQQNARLKRELEEQKVAATQV.

This sequence belongs to the GpsB family. In terms of assembly, forms polymers through the coiled coil domains. Interacts with PBP1, MreC and EzrA.

It localises to the cytoplasm. In terms of biological role, divisome component that associates with the complex late in its assembly, after the Z-ring is formed, and is dependent on DivIC and PBP2B for its recruitment to the divisome. Together with EzrA, is a key component of the system that regulates PBP1 localization during cell cycle progression. Its main role could be the removal of PBP1 from the cell pole after pole maturation is completed. Also contributes to the recruitment of PBP1 to the division complex. Not essential for septum formation. In Bacillus mycoides (strain KBAB4) (Bacillus weihenstephanensis), this protein is Cell cycle protein GpsB.